Here is a 555-residue protein sequence, read N- to C-terminus: T-complex protein 1 subunit gamma (555 aa).

Residues 527 to 555 (KKKQAPGSGPSKPTIETEGDADNEQILPD) form a disordered region.

It belongs to the TCP-1 chaperonin family. As to quaternary structure, heterooligomeric complex of about 850 to 900 kDa that forms two stacked rings, 12 to 16 nm in diameter. Interacts with CCT8.

Its subcellular location is the cytoplasm. In terms of biological role, molecular chaperone; assists the folding of proteins upon ATP hydrolysis. Known to play a role, in vitro, in the folding of actin and tubulin. The protein is T-complex protein 1 subunit gamma of Arabidopsis thaliana (Mouse-ear cress).